The sequence spans 268 residues: NAC transcription factor 29 (268 aa).

In terms of domain architecture, NAC spans leucine 9–lysine 161. The DNA-binding element occupies valine 106–leucine 167.

As to expression, expressed in senescing leaves, petals and sepals.

Its subcellular location is the nucleus. In terms of biological role, transcription activator that binds to, and transactivates the promoter of the abscisic aldehyde oxidase AAO3. Promotes chlorophyll degradation in leaves by enhancing transcription of AAO3, which leads to increased levels of the senescence-inducing hormone abscisic acid (ABA). Involved in the control of dehydration in senescing leaves. Binds to the DNA sequence 5'-CACGTAAGT-3' of SAG113 promoter. SAG113 acts as a negative regulator of ABA signaling for stomatal closure in leaves, and controls water loss during leaf senescence. Transcription factor of the NAC family involved in senescence. May function in the transition between active cell division and cell expansion. Required for normal seed development and morphology. This is NAC transcription factor 29 (NAC029) from Arabidopsis thaliana (Mouse-ear cress).